We begin with the raw amino-acid sequence, 847 residues long: Putative disease resistance RPP13-like protein 2 (847 aa).

Positions 26 to 42 (GVKDDLEELKTELTCIQ) form a coiled coil. One can recognise an NB-ARC domain in the interval 142–446 (STSRVREVRR…AEGFIQEDEE (305 aa)). 191–198 (GMEGLGKT) is an ATP binding site. LRR repeat units follow at residues 587–610 (LVHL…ISNL), 612–634 (FLQT…NLTS), 703–726 (LKNL…TVRF), 749–774 (FPSL…KLQR), and 807–830 (IKRL…NLDN).

It belongs to the disease resistance NB-LRR family. RPP13 subfamily.

Functionally, potential disease resistance protein. In Arabidopsis thaliana (Mouse-ear cress), this protein is Putative disease resistance RPP13-like protein 2 (RPP13L2).